The chain runs to 251 residues: 14-3-3-like protein (251 aa).

It belongs to the 14-3-3 family.

The polypeptide is 14-3-3-like protein (Fucus vesiculosus (Bladder wrack)).